The chain runs to 85 residues: MNTASDQTHAISVNQLRSFIERIERLEEEKKAIADDIKDVYTELKGSGFDSKAVRKIVGLRKQEDHKRMEEEAVIQLYKNALGMT.

It belongs to the UPF0335 family.

This is UPF0335 protein BARBAKC583_0130 from Bartonella bacilliformis (strain ATCC 35685 / KC583 / Herrer 020/F12,63).